We begin with the raw amino-acid sequence, 948 residues long: Puromycin-sensitive aminopeptidase (948 aa).

Substrate contacts are provided by residues Glu206 and 341–345 (GAMEN). His377 provides a ligand contact to Zn(2+). The Proton acceptor role is filled by Glu378. Residues His381 and Glu400 each contribute to the Zn(2+) site.

Belongs to the peptidase M1 family. It depends on Zn(2+) as a cofactor. In terms of tissue distribution, expressed mainly in intestinal cells in the posterior part of the intestine and in amphid sensory neurons and nerve ring neurons. Expressed in neurons in the male tail. Expressed in mature spermatids (at protein level).

The protein localises to the cytoplasm. It is found in the cell cortex. The protein resides in the chromosome. It localises to the cytoskeleton. Its subcellular location is the spindle pole. The enzyme catalyses Release of an N-terminal amino acid, preferentially alanine, from a wide range of peptides, amides and arylamides.. Its activity is regulated as follows. Inhibited by chelating agent 1,10-phenanthroline, aminopeptidase inhibitors actinonin, amastatin, and leuhistin, and to a lesser extent by puromycin. Its function is as follows. Aminopeptidase. Required for the exit from meiosis, probably upstream of cyclin cyb-3. Involved in the establishment of the anterior-posterior polarity at the embryonic 1-cell stage by regulating the dynamics of sperm-donated centrosomes. Plays a role in oocyte maturation. Required for embryonic development. The protein is Puromycin-sensitive aminopeptidase of Caenorhabditis elegans.